We begin with the raw amino-acid sequence, 422 residues long: UDP-N-acetylglucosamine 1-carboxyvinyltransferase (422 aa).

22 to 23 (KN) serves as a coordination point for phosphoenolpyruvate. UDP-N-acetyl-alpha-D-glucosamine is bound at residue R92. C116 (proton donor) is an active-site residue. C116 is subject to 2-(S-cysteinyl)pyruvic acid O-phosphothioketal. UDP-N-acetyl-alpha-D-glucosamine is bound by residues 121–125 (RPIDL), D307, and L329.

This sequence belongs to the EPSP synthase family. MurA subfamily.

It localises to the cytoplasm. It carries out the reaction phosphoenolpyruvate + UDP-N-acetyl-alpha-D-glucosamine = UDP-N-acetyl-3-O-(1-carboxyvinyl)-alpha-D-glucosamine + phosphate. It participates in cell wall biogenesis; peptidoglycan biosynthesis. Functionally, cell wall formation. Adds enolpyruvyl to UDP-N-acetylglucosamine. This Sulfurovum sp. (strain NBC37-1) protein is UDP-N-acetylglucosamine 1-carboxyvinyltransferase.